Here is a 194-residue protein sequence, read N- to C-terminus: dCTP deaminase (194 aa).

Residues R110–R115, D128, V136–E138, Y171, K178, and Q182 contribute to the dCTP site. The active-site Proton donor/acceptor is the E138. The segment at R174–K194 is disordered.

Belongs to the dCTP deaminase family. As to quaternary structure, homotrimer.

It carries out the reaction dCTP + H2O + H(+) = dUTP + NH4(+). Its pathway is pyrimidine metabolism; dUMP biosynthesis; dUMP from dCTP (dUTP route): step 1/2. Catalyzes the deamination of dCTP to dUTP. The sequence is that of dCTP deaminase from Shewanella frigidimarina (strain NCIMB 400).